The following is a 390-amino-acid chain: uncharacterized protein (390 aa).

A run of 11 helical transmembrane segments spans residues 10 to 30 (LSFC…LPIL), 43 to 63 (FLIG…QIPF), 81 to 101 (FMFF…GLII), 134 to 154 (AIGV…PIIV), 162 to 182 (IFWI…FFVP), 213 to 233 (FYLG…MIPN), 246 to 266 (WKVY…FIFY), 272 to 292 (ILEN…IIFL), 298 to 318 (LLFL…LEVF), 341 to 361 (TSQF…YSFL), and 363 to 383 (FSQI…FSFF).

This sequence belongs to the major facilitator superfamily.

Its subcellular location is the cell membrane. This is an uncharacterized protein from Buchnera aphidicola subsp. Acyrthosiphon pisum (strain APS) (Acyrthosiphon pisum symbiotic bacterium).